The chain runs to 287 residues: Protein REVEILLE 2 (287 aa).

The 55-residue stretch at Thr-31–Ala-85 folds into the HTH myb-type domain. Positions Trp-58–Phe-81 form a DNA-binding region, H-T-H motif. The segment at Gln-134–Ser-177 is disordered. Over residues Ile-156–Ser-169 the composition is skewed to low complexity.

Its subcellular location is the nucleus. In terms of biological role, positive regulator for cold-responsive gene expression and cold tolerance. Part of a regulatory feedback loop that controls a subset of the circadian outputs and modulates the central oscillator. Negatively self-regulates its own expression. This Arabidopsis thaliana (Mouse-ear cress) protein is Protein REVEILLE 2 (RVE2).